Reading from the N-terminus, the 277-residue chain is S-formylglutathione hydrolase FrmB (277 aa).

Active-site charge relay system residues include Ser-145, Asp-221, and His-254.

The protein belongs to the esterase D family.

The enzyme catalyses S-formylglutathione + H2O = formate + glutathione + H(+). Functionally, serine hydrolase involved in the detoxification of formaldehyde. Hydrolyzes S-formylglutathione to glutathione and formate. The polypeptide is S-formylglutathione hydrolase FrmB (frmB) (Escherichia coli O6:K15:H31 (strain 536 / UPEC)).